The primary structure comprises 189 residues: Elongation factor P (189 aa).

Lys-34 carries the post-translational modification N6-(3,6-diaminohexanoyl)-5-hydroxylysine.

It belongs to the elongation factor P family. Post-translationally, may be beta-lysylated on the epsilon-amino group of Lys-34 by the combined action of EpmA and EpmB, and then hydroxylated on the C5 position of the same residue by EpmC (if this protein is present). Lysylation is critical for the stimulatory effect of EF-P on peptide-bond formation. The lysylation moiety may extend toward the peptidyltransferase center and stabilize the terminal 3-CCA end of the tRNA. Hydroxylation of the C5 position on Lys-34 may allow additional potential stabilizing hydrogen-bond interactions with the P-tRNA.

It is found in the cytoplasm. Its pathway is protein biosynthesis; polypeptide chain elongation. Its function is as follows. Involved in peptide bond synthesis. Alleviates ribosome stalling that occurs when 3 or more consecutive Pro residues or the sequence PPG is present in a protein, possibly by augmenting the peptidyl transferase activity of the ribosome. Modification of Lys-34 is required for alleviation. This is Elongation factor P from Buchnera aphidicola subsp. Acyrthosiphon pisum (strain APS) (Acyrthosiphon pisum symbiotic bacterium).